A 643-amino-acid chain; its full sequence is Protein RTF1 homolog (643 aa).

Disordered regions lie at residues Met1–Glu107 and Ile124–Pro262. Residue Gly2 is modified to N-acetylglycine. Residues Lys65–Arg77 show a composition bias toward basic and acidic residues. Ser87 carries the phosphoserine modification. Residues Ile124–Thr157 are compositionally biased toward basic and acidic residues. Over residues Ala162–Arg171 the composition is skewed to low complexity. Over residues Ser172–Ala188 the composition is skewed to basic and acidic residues. Over residues Ser225–Asp235 the composition is skewed to low complexity. The region spanning Val261–Ser396 is the Plus3 domain.

As to quaternary structure, component of the nuclear PAF1 complex (PAF1C), which consists of VIP2/ELF7/PAF1, VIP3/SKI8/WDR61, VIP4/LEO1, VIP5/RTF1, VIP6/ELF8/CTR9 and CDC73.

The protein resides in the nucleus. Its function is as follows. Component of the PAF1 complex (PAF1C) which is involved in histone modifications such as methylation on histone H3 'Lys-4' (H3K4me3). Involved in regulation of flowering time. Required for the expression of the flowering repressors and FLC and MADS-box genes of the MAF family. Involved in the control of seed dormancy and germination. This chain is Protein RTF1 homolog, found in Arabidopsis thaliana (Mouse-ear cress).